A 406-amino-acid polypeptide reads, in one-letter code: Endoplasmic reticulum resident protein 44 (406 aa).

Residues 1 to 29 (MHPAVFLSLPDLRCSLLLLVTWVFTPVTT) form the signal peptide. Residues 30–138 (EITSLDTENI…VKALADYIRQ (109 aa)) form the Thioredoxin domain. 2 disulfide bridges follow: Cys-189/Cys-241 and Cys-301/Cys-318. The segment at 236–285 (WIQDKCVPLVREITFENGEELTEEGLPFLILFHMKEDTESLEIFQNEVAR) is interaction with ITPR1. Residues 360 to 387 (FHHGPDPTDTAPGEQAQDVASSPPESSF) are disordered. A compositionally biased stretch (polar residues) spans 377–387 (DVASSPPESSF). The Prevents secretion from ER motif lies at 403 to 406 (RDEL).

As to quaternary structure, forms mixed disulfides with both ERO1A and ERO1B and cargo folding intermediates; the interactions with ERO1A and ERO1B result in their retention in the endoplasmic reticulum. Directly interacts with ITPR1 in a pH-, redox state- and calcium-dependent manner, but not with ITPR2 or ITPR3. The strength of this interaction inversely correlates with calcium concentration.

Its subcellular location is the endoplasmic reticulum lumen. In terms of biological role, mediates thiol-dependent retention in the early secretory pathway, forming mixed disulfides with substrate proteins through its conserved CRFS motif. Inhibits the calcium channel activity of ITPR1. May have a role in the control of oxidative protein folding in the endoplasmic reticulum. Required to retain ERO1A and ERO1B in the endoplasmic reticulum. In Homo sapiens (Human), this protein is Endoplasmic reticulum resident protein 44 (ERP44).